A 229-amino-acid chain; its full sequence is Large ribosomal subunit protein uL1 (229 aa).

This sequence belongs to the universal ribosomal protein uL1 family. As to quaternary structure, part of the 50S ribosomal subunit.

Its function is as follows. Binds directly to 23S rRNA. The L1 stalk is quite mobile in the ribosome, and is involved in E site tRNA release. Functionally, protein L1 is also a translational repressor protein, it controls the translation of the L11 operon by binding to its mRNA. The polypeptide is Large ribosomal subunit protein uL1 (Staphylococcus aureus (strain MRSA252)).